The sequence spans 102 residues: NADH-quinone oxidoreductase subunit K (102 aa).

3 helical membrane passes run 5–25 (LEHY…GIFL), 31–51 (IVIL…LVAF), and 66–86 (FVLT…VVFF).

The protein belongs to the complex I subunit 4L family. In terms of assembly, NDH-1 is composed of 14 different subunits. Subunits NuoA, H, J, K, L, M, N constitute the membrane sector of the complex.

It is found in the cell inner membrane. The enzyme catalyses a quinone + NADH + 5 H(+)(in) = a quinol + NAD(+) + 4 H(+)(out). In terms of biological role, NDH-1 shuttles electrons from NADH, via FMN and iron-sulfur (Fe-S) centers, to quinones in the respiratory chain. The immediate electron acceptor for the enzyme in this species is believed to be ubiquinone. Couples the redox reaction to proton translocation (for every two electrons transferred, four hydrogen ions are translocated across the cytoplasmic membrane), and thus conserves the redox energy in a proton gradient. This Parvibaculum lavamentivorans (strain DS-1 / DSM 13023 / NCIMB 13966) protein is NADH-quinone oxidoreductase subunit K.